The sequence spans 735 residues: Muskelin (735 aa).

An N-acetylalanine modification is found at alanine 2. The LisH domain occupies 172-204; it reads REQEAIRLCLKHFRQHNYTEAFESLQKKTKIAL. A CTLH domain is found at 206–258; it reads HPMLTDMHDKLVLKGDFDACEELIEKAVNDGLFNQYISQQEYKPRWSQIIPKS. 6 Kelch repeats span residues 284–330, 339–391, 400–458, 469–515, 526–578, and 597–651; these read TVYL…SCHK, QIYT…FDHQ, MIYT…SRIG, CLYV…TGFT, EIHV…SLQE, and VHYL…AQMD.

In terms of assembly, homodimer; may form higher oligomers. Identified in the CTLH complex that contains GID4, RANBP9 and/or RANBP10, MKLN1, MAEA, RMND5A (or alternatively its paralog RMND5B), GID8, ARMC8, WDR26 and YPEL5. Within this complex, MAEA, RMND5A (or alternatively its paralog RMND5B), GID8, WDR26, and RANBP9 and/or RANBP10 form the catalytic core, while GID4, MKLN1, ARMC8 and YPEL5 have ancillary roles. Interacts with RANBP9. Part of a complex consisting of RANBP9, MKLN1 and GID8. Interacts with GABRA1. Interacts with the C-terminal tail of PTGER3.

The protein localises to the cytoplasm. Its subcellular location is the cell projection. It localises to the ruffle. The protein resides in the cell cortex. It is found in the synapse. The protein localises to the postsynapse. Component of the CTLH E3 ubiquitin-protein ligase complex that selectively accepts ubiquitin from UBE2H and mediates ubiquitination and subsequent proteasomal degradation of the transcription factor HBP1. Required for internalization of the GABA receptor GABRA1 from the cell membrane via endosomes and subsequent GABRA1 degradation. Acts as a mediator of cell spreading and cytoskeletal responses to the extracellular matrix component THBS1. The sequence is that of Muskelin (Mkln1) from Rattus norvegicus (Rat).